Reading from the N-terminus, the 255-residue chain is Imidazole glycerol phosphate synthase subunit HisF (255 aa).

Residues aspartate 11 and aspartate 130 contribute to the active site.

The protein belongs to the HisA/HisF family. In terms of assembly, heterodimer of HisH and HisF.

It is found in the cytoplasm. It catalyses the reaction 5-[(5-phospho-1-deoxy-D-ribulos-1-ylimino)methylamino]-1-(5-phospho-beta-D-ribosyl)imidazole-4-carboxamide + L-glutamine = D-erythro-1-(imidazol-4-yl)glycerol 3-phosphate + 5-amino-1-(5-phospho-beta-D-ribosyl)imidazole-4-carboxamide + L-glutamate + H(+). The protein operates within amino-acid biosynthesis; L-histidine biosynthesis; L-histidine from 5-phospho-alpha-D-ribose 1-diphosphate: step 5/9. In terms of biological role, IGPS catalyzes the conversion of PRFAR and glutamine to IGP, AICAR and glutamate. The HisF subunit catalyzes the cyclization activity that produces IGP and AICAR from PRFAR using the ammonia provided by the HisH subunit. This Campylobacter lari (strain RM2100 / D67 / ATCC BAA-1060) protein is Imidazole glycerol phosphate synthase subunit HisF.